Consider the following 599-residue polypeptide: Adenine deaminase (599 aa).

The protein belongs to the metallo-dependent hydrolases superfamily. Adenine deaminase family. Requires Mn(2+) as cofactor.

It catalyses the reaction adenine + H2O + H(+) = hypoxanthine + NH4(+). The chain is Adenine deaminase from Clostridium botulinum (strain Langeland / NCTC 10281 / Type F).